We begin with the raw amino-acid sequence, 93 residues long: MAAPRKKTQRKKKDPNAPKRALSAYMFFANENRDIVRAENPGITFGQVGRILGEKWKALNEDEKAPYEAKAEADKKRYESEKELYIATKAQSE.

A DNA-binding region (HMG box) is located at residues 18–86 (PKRALSAYMF…RYESEKELYI (69 aa)).

The protein belongs to the NHP6 family. As to quaternary structure, weakly associates with the stable SPT16-POB3 heterodimer to form the FACT complex.

It localises to the nucleus. The protein localises to the chromosome. Its function is as follows. DNA-binding protein that induces severe bending of DNA. Required for DNA-binding by the FACT complex, a general chromatin factor that acts to reorganize nucleosomes. The FACT complex is involved in multiple processes that require DNA as a template such as mRNA elongation, DNA replication and DNA repair. Also augments the fidelity of transcription by RNA polymerase III independently of any role in the FACT complex. The polypeptide is Non-histone chromosomal protein 6 (NHP6) (Kluyveromyces lactis (strain ATCC 8585 / CBS 2359 / DSM 70799 / NBRC 1267 / NRRL Y-1140 / WM37) (Yeast)).